A 356-amino-acid polypeptide reads, in one-letter code: MAAKLLFFLLFLVSALSVALAGFEEDNPIRSVTQRPDSIEPAILGVLGSCRHAFHFARFARRYGKSYGSEEEIKKRFGIFVENLAFIRSTNRKDLSYTLGINQFADLTWEEFRTNRLGAAQNCSATAHGNHRFVDGVLPVTRDWREQGIVSPVKDQGSCGSCWTFSTTGALEAAYTQLTGKSTSLSEQQLVDCASAFNNFGCNGGLPSQAFEYVKYNGGIDTEQTYPYLGVNGICNFKQENVGVKVIDSINITLGAEDELKHAVGLVRPVSVAFEVVKGFNLYKKGVYSSDTCGRDPMDVNHAVLAVGYGVEDGIPYWLIKNSWGTNWGDNGYFKMELGKNMCGVATCASYPIVAV.

Residue Asn-122 is glycosylated (N-linked (GlcNAc...) asparagine). Disulfide bonds link Cys-159/Cys-202 and Cys-193/Cys-235. The active site involves Cys-162. Asn-251 carries N-linked (GlcNAc...) asparagine glycosylation. Cys-293 and Cys-343 are oxidised to a cystine. Catalysis depends on residues His-302 and Asn-322.

Belongs to the peptidase C1 family. As to quaternary structure, forms homodimers, homotrimers and homotetramers. Accumulates in the inner part of vanilla pods (at protein level). Expressed in single cells located a few cell layers from the inner epidermis.

Its subcellular location is the plastid. The protein localises to the chloroplast. It carries out the reaction (E)-ferulate + H2O = vanillin + acetate. The catalysed reaction is 4-O-beta-D-glucosyl-trans-ferulate + H2O = 4-O-beta-D-glucosyl-vanillin + acetate. Its pathway is aromatic compound metabolism; phenylpropanoid biosynthesis. Functionally, involved in the biosynthesis of vanillin (4-hydroxy-3-methoxy-benzaldehyde) and derivative natural products, key components of vanilla pods flavor. Catalyzes the double carbon bond cleavage of ferulic acid to vanillin and of their respective glucosides via a coupled non-oxidative hydratase/lyase reaction. Inactive toward p-coumaric acid, caffeic acid and their glucosides derivatives. The chain is Vanillin synthase, chloroplastic from Vanilla planifolia (Vanilla).